Consider the following 1325-residue polypeptide: Nonribosomal peptide synthetase (1325 aa).

The interval 248–644 (YQQLDRLSTR…LGEIEYQIQQ (397 aa)) is adenylation. Residues 779-856 (EIVNPGEITL…DQARLLRPLS (78 aa)) form the Carrier domain. Residue Ser-816 is modified to O-(pantetheine 4'-phosphoryl)serine. The interval 893-1310 (EDVYPCTPLQ…DDYSTTLHTL (418 aa)) is condensation.

This sequence belongs to the NRP synthetase family. The cofactor is pantetheine 4'-phosphate.

It participates in antifungal biosynthesis. Functionally, nonribosomal peptide synthetase; part of the gene cluster that mediates the biosynthesis of the tetrahydropyranyl antifungal agent lanomycin that acts as an inhibitor of CYP51 and blocks the ergosterol biosynthesis. The biosynthesis probably begins with the formation of an hexaketide, followed by methionine mediated alkylation of C-2 and C-6, and methylation of the reduced C-3 oxygen, pyran forming reductive ring closure, oxygenation of C-4, beta-keto reduction, enoyl reduction and dehydration of the remaining oxygens, and finally, acylation with glycine to complete the biosynthesis. This is Nonribosomal peptide synthetase from Pyrenophora dematioidea (Helminthosporium dematioideum).